Consider the following 562-residue polypeptide: Dihydroxy-acid dehydratase (562 aa).

Cysteine 51 serves as a coordination point for [2Fe-2S] cluster. Aspartate 83 is a Mg(2+) binding site. Cysteine 124 serves as a coordination point for [2Fe-2S] cluster. Mg(2+) contacts are provided by aspartate 125 and lysine 126. At lysine 126 the chain carries N6-carboxylysine. Cysteine 196 lines the [2Fe-2S] cluster pocket. Glutamate 448 contributes to the Mg(2+) binding site. Serine 474 serves as the catalytic Proton acceptor.

It belongs to the IlvD/Edd family. Homodimer. Requires [2Fe-2S] cluster as cofactor. Mg(2+) is required as a cofactor.

The catalysed reaction is (2R)-2,3-dihydroxy-3-methylbutanoate = 3-methyl-2-oxobutanoate + H2O. It carries out the reaction (2R,3R)-2,3-dihydroxy-3-methylpentanoate = (S)-3-methyl-2-oxopentanoate + H2O. It participates in amino-acid biosynthesis; L-isoleucine biosynthesis; L-isoleucine from 2-oxobutanoate: step 3/4. The protein operates within amino-acid biosynthesis; L-valine biosynthesis; L-valine from pyruvate: step 3/4. In terms of biological role, functions in the biosynthesis of branched-chain amino acids. Catalyzes the dehydration of (2R,3R)-2,3-dihydroxy-3-methylpentanoate (2,3-dihydroxy-3-methylvalerate) into 2-oxo-3-methylpentanoate (2-oxo-3-methylvalerate) and of (2R)-2,3-dihydroxy-3-methylbutanoate (2,3-dihydroxyisovalerate) into 2-oxo-3-methylbutanoate (2-oxoisovalerate), the penultimate precursor to L-isoleucine and L-valine, respectively. The sequence is that of Dihydroxy-acid dehydratase from Pyrobaculum aerophilum (strain ATCC 51768 / DSM 7523 / JCM 9630 / CIP 104966 / NBRC 100827 / IM2).